Reading from the N-terminus, the 260-residue chain is Cobalt transport protein CbiM (260 aa).

The N-terminal stretch at 1-34 is a signal peptide; sequence MKLGESMKKNATLSVKIIAFLGVLIFTVMPVANA. A run of 6 helical transmembrane segments spans residues 39-59, 77-97, 109-129, 132-152, 175-195, and 215-235; these read EGYL…PFLI, LLFA…LPSF, LSTI…VLLF, LLLA…MAVM, IFFS…IQLG, and VFAI…VLIF.

It belongs to the CbiM family. In terms of assembly, forms an energy-coupling factor (ECF) transporter complex composed of an ATP-binding protein (A component, CbiO), a transmembrane protein (T component, CbiQ) and 2 possible substrate-capture proteins (S components, CbiM and CbiN) of unknown stoichimetry.

The protein localises to the cell membrane. It participates in cofactor biosynthesis; adenosylcobalamin biosynthesis. Its function is as follows. Part of the energy-coupling factor (ECF) transporter complex CbiMNOQ involved in cobalt import. In Clostridium cellulovorans (strain ATCC 35296 / DSM 3052 / OCM 3 / 743B), this protein is Cobalt transport protein CbiM.